The chain runs to 154 residues: MTTSIELSSYRDQHYKGSRFEQERSLRDSSTLYVGNLSFYTAEEQIHELFSRCGDVRMIVMGLDKYKKTPCGFCFVEYYKRSEAEAAMRFVNGTRLDDRLIRVDWDAGFIEGRQYGRGKTGGQVRDEYRTDYDAARGGYGKLLTQKIAPNPDNR.

Residues Tyr-10, Tyr-33, 102–106, 113–117, and 123–124 each bind mRNA; these read RVDWD, RQYGR, and QV. The region spanning 30–108 is the RRM domain; it reads STLYVGNLSF…RLIRVDWDAG (79 aa).

It belongs to the RRM NCBP2 family. Component of the nuclear cap-binding complex (CBC), a heterodimer composed of Cbp80 and Cbp20 that interacts with m7GpppG-capped RNA. Interacts with Ars2.

Its subcellular location is the nucleus. In terms of biological role, component of the cap-binding complex (CBC), which binds co-transcriptionally to the 5' cap of pre-mRNAs and is involved in various processes such as pre-mRNA splicing and RNA-mediated gene silencing (RNAi). The CBC complex is involved in miRNA-mediated RNA interference via its interaction with Ars2 and is required for primary microRNAs (miRNAs) processing. Also involved in innate immunity via the short interfering RNAs (siRNAs) processing machinery by restricting the viral RNA production. In the CBC complex, Cbp20 recognizes and binds capped RNAs (m7GpppG-capped RNA) but requires Cbp80 to stabilize the movement of its N-terminal loop and lock the CBC into a high affinity cap-binding state with the cap structure. This Drosophila virilis (Fruit fly) protein is Nuclear cap-binding protein subunit 2-A (Cbp20-A).